The following is a 178-amino-acid chain: Probetacellulin (178 aa).

An N-terminal signal peptide occupies residues 1–31 (MARAAPGSGASPLPLLPALALGLVILHCVVA). The Extracellular segment spans residues 32–118 (DGNSTRSPED…LFYLRGDRGQ (87 aa)). An N-linked (GlcNAc...) asparagine glycan is attached at asparagine 34. Residues 65–105 (HFSRCPKQYKHYCIKGRCRFVVAEQTPSCVCDEGYAGARCE) form the EGF-like domain. Disulfide bonds link cysteine 69-cysteine 82, cysteine 77-cysteine 93, and cysteine 95-cysteine 104. Residues 112 to 178 (LRGDRGQILV…NDDIQETSIA (67 aa)) constitute a propeptide, removed in mature form. A helical membrane pass occupies residues 119-139 (ILVICLIAVMVIFIILVVSIC). The Cytoplasmic segment spans residues 140 to 178 (TCCHPLRKRRKRRKKEEEMETLGKDITPINDDIQETSIA).

As to quaternary structure, monomer. Interacts with EGFR and ERBB4. Expressed in a wide range of tissues, including the mammary gland.

It localises to the secreted. Its subcellular location is the extracellular space. The protein resides in the cell membrane. Its function is as follows. Growth factor that binds to EGFR, ERBB4 and other EGF receptor family members. Potent mitogen for retinal pigment epithelial cells and vascular smooth muscle cells. In Bos taurus (Bovine), this protein is Probetacellulin (BTC).